We begin with the raw amino-acid sequence, 573 residues long: Proline--tRNA ligase (573 aa).

This sequence belongs to the class-II aminoacyl-tRNA synthetase family. ProS type 1 subfamily. In terms of assembly, homodimer.

The protein resides in the cytoplasm. It carries out the reaction tRNA(Pro) + L-proline + ATP = L-prolyl-tRNA(Pro) + AMP + diphosphate. In terms of biological role, catalyzes the attachment of proline to tRNA(Pro) in a two-step reaction: proline is first activated by ATP to form Pro-AMP and then transferred to the acceptor end of tRNA(Pro). As ProRS can inadvertently accommodate and process non-cognate amino acids such as alanine and cysteine, to avoid such errors it has two additional distinct editing activities against alanine. One activity is designated as 'pretransfer' editing and involves the tRNA(Pro)-independent hydrolysis of activated Ala-AMP. The other activity is designated 'posttransfer' editing and involves deacylation of mischarged Ala-tRNA(Pro). The misacylated Cys-tRNA(Pro) is not edited by ProRS. The sequence is that of Proline--tRNA ligase from Cupriavidus necator (strain ATCC 17699 / DSM 428 / KCTC 22496 / NCIMB 10442 / H16 / Stanier 337) (Ralstonia eutropha).